A 340-amino-acid chain; its full sequence is Glutaminyl-peptide cyclotransferase (340 aa).

Positions 1-23 (MAIGSVVFAAAGLLLLLLPPSHQ) are cleaved as a signal peptide. An N-linked (GlcNAc...) asparagine glycan is attached at Asn42. Alpha-D-mannopyranose contacts are provided by Arg85 and Glu91. Residues Cys113 and Cys136 are joined by a disulfide bond. Asp131 contacts Zn(2+). Gln151 and Arg155 together coordinate alpha-D-mannopyranose. Residue Asn156 is glycosylated (N-linked (GlcNAc...) asparagine). Residue Glu170 is the Proton acceptor of the active site. Residue Glu171 coordinates Zn(2+). Asp218 (proton acceptor) is an active-site residue. His297 contacts Zn(2+). Leu306 contributes to the alpha-D-mannopyranose binding site.

Belongs to the glutaminyl-peptide cyclotransferase family.

The protein localises to the secreted. It carries out the reaction N-terminal L-glutaminyl-[peptide] = N-terminal 5-oxo-L-prolyl-[peptide] + NH4(+). With respect to regulation, inhibited by imidazoles (imidazole, benzimidazole, 1-benzylimidazole, 1-methylimidazole, P150/03, N-omega-acetylhistamine and 4-methylimidazole) and cysteamines (cysteamine, N-dimethylcysteamine and N-diethylcysteamine). Partially inhibited by PDB50 1(3,4-dimethoxyphenyl)-3-(3-imidazol-1-ylpropyl)thiourea. Functionally, acts as a glutaminyl-peptide cyclotransferase. Responsible for the biosynthesis of pyroglutamyl peptides. Might be more efficient in the conversion of tri and tetrapeptides in vitro. Might have a relative preference for substrates containing hydrophobic amino acids in vitro. In Drosophila melanogaster (Fruit fly), this protein is Glutaminyl-peptide cyclotransferase.